A 529-amino-acid polypeptide reads, in one-letter code: ATP synthase F(1) complex catalytic subunit beta, mitochondrial (529 aa).

The transit peptide at 1–46 (MLSLVGRVASASASGALRGLSPSAALPQAQLLLRAAPAGVHPARDY) directs the protein to the mitochondrion. O-linked (GlcNAc) serine glycosylation is present at S106. K124, K133, and K161 each carry N6-acetyllysine; alternate. N6-succinyllysine; alternate occurs at positions 124, 133, and 161. K198 bears the N6-acetyllysine mark. G209, V210, G211, K212, T213, and V214 together coordinate ADP. G209 is a binding site for ATP. The phosphate site is built by G209, V210, G211, K212, and T213. 4 residues coordinate ATP: G211, K212, T213, and V214. Residue T213 participates in Mg(2+) binding. E238 lines the Mg(2+) pocket. R239 serves as a coordination point for ATP. N6-acetyllysine; alternate is present on residues K259 and K264. An N6-succinyllysine; alternate mark is found at K259 and K264. Phosphothreonine is present on T312. N6-acetyllysine is present on K426. At S433 the chain carries Phosphoserine. An N6-acetyllysine mark is found at K480 and K485. Residue K522 is modified to N6-acetyllysine; alternate. The residue at position 522 (K522) is an N6-succinyllysine; alternate. S529 carries the post-translational modification Phosphoserine.

Belongs to the ATPase alpha/beta chains family. Homotrimer. Component of the ATP synthase complex composed at least of ATP5F1A/subunit alpha, ATP5F1B/subunit beta, ATP5MC1/subunit c (homooctomer), MT-ATP6/subunit a, MT-ATP8/subunit 8, ATP5ME/subunit e, ATP5MF/subunit f, ATP5MG/subunit g, ATP5MK/subunit k, ATP5MJ/subunit j, ATP5F1C/subunit gamma, ATP5F1D/subunit delta, ATP5F1E/subunit epsilon, ATP5PF/subunit F6, ATP5PB/subunit b, ATP5PD/subunit d, ATP5PO/subunit OSCP. ATP synthase complex consists of a soluble F(1) head domain (subunits alpha(3) and beta(3)) - the catalytic core - and a membrane F(0) domain - the membrane proton channel (subunits c, a, 8, e, f, g, k and j). These two domains are linked by a central stalk (subunits gamma, delta, and epsilon) rotating inside the F1 region and a stationary peripheral stalk (subunits F6, b, d, and OSCP). Interacts with PPIF. Interacts with BCL2L1 isoform BCL-X(L); the interaction mediates the association of BCL2L1 isoform BCL-X(L) with the mitochondrial membrane F(1)F(0) ATP synthase and enhances neurons metabolic efficiency. Interacts with CLN5 and PPT1. Interacts with S100A1; this interaction increases F1-ATPase activity. Interacts with MTLN. Interacts with TTC5/STRAP; the interaction results in decreased mitochondrial ATP production. Acetylation of Lys-133 is observed in liver mitochondria from fasted mice but not from fed mice.

The protein resides in the mitochondrion inner membrane. It carries out the reaction ATP + H2O + 4 H(+)(in) = ADP + phosphate + 5 H(+)(out). Catalytic subunit beta, of the mitochondrial membrane ATP synthase complex (F(1)F(0) ATP synthase or Complex V) that produces ATP from ADP in the presence of a proton gradient across the membrane which is generated by electron transport complexes of the respiratory chain. ATP synthase complex consist of a soluble F(1) head domain - the catalytic core - and a membrane F(1) domain - the membrane proton channel. These two domains are linked by a central stalk rotating inside the F(1) region and a stationary peripheral stalk. During catalysis, ATP synthesis in the catalytic domain of F(1) is coupled via a rotary mechanism of the central stalk subunits to proton translocation. In vivo, can only synthesize ATP although its ATP hydrolase activity can be activated artificially in vitro. With the subunit alpha (ATP5F1A), forms the catalytic core in the F(1) domain. The sequence is that of ATP synthase F(1) complex catalytic subunit beta, mitochondrial from Mus musculus (Mouse).